Here is a 443-residue protein sequence, read N- to C-terminus: Probable D-serine dehydratase (443 aa).

Position 118 is an N6-(pyridoxal phosphate)lysine (Lys118).

The protein belongs to the serine/threonine dehydratase family. DsdA subfamily. The cofactor is pyridoxal 5'-phosphate.

It carries out the reaction D-serine = pyruvate + NH4(+). The polypeptide is Probable D-serine dehydratase (Colwellia psychrerythraea (strain 34H / ATCC BAA-681) (Vibrio psychroerythus)).